We begin with the raw amino-acid sequence, 103 residues long: Small ribosomal subunit protein bS6c (103 aa).

This sequence belongs to the bacterial ribosomal protein bS6 family.

It localises to the plastid. The protein resides in the chloroplast. Its function is as follows. Binds together with bS18 to 16S ribosomal RNA. This Gracilaria tenuistipitata var. liui (Red alga) protein is Small ribosomal subunit protein bS6c.